The sequence spans 556 residues: Genetic interactor of prohibitins 3, mitochondrial (556 aa).

The transit peptide at 1 to 21 (MLNLCHALRGVRQFSCSVIVK) directs the protein to the mitochondrion. The 193-residue stretch at 113-305 (ESTLNDILNY…LFDLPGYSTS (193 aa)) folds into the CP-type G domain.

Belongs to the TRAFAC class YlqF/YawG GTPase family. GEP3 subfamily.

Its subcellular location is the mitochondrion. Functionally, interacts genetically with prohibitins and thus may be involved in the mitochondrial lipid metabolism. This is Genetic interactor of prohibitins 3, mitochondrial (GEP3) from Saccharomyces cerevisiae (strain Zymaflore VL3) (Baker's yeast).